The primary structure comprises 302 residues: Sulfate adenylyltransferase subunit 2 (302 aa).

This sequence belongs to the PAPS reductase family. CysD subfamily. Heterodimer composed of CysD, the smaller subunit, and CysN.

The catalysed reaction is sulfate + ATP + H(+) = adenosine 5'-phosphosulfate + diphosphate. The protein operates within sulfur metabolism; hydrogen sulfide biosynthesis; sulfite from sulfate: step 1/3. Functionally, with CysN forms the ATP sulfurylase (ATPS) that catalyzes the adenylation of sulfate producing adenosine 5'-phosphosulfate (APS) and diphosphate, the first enzymatic step in sulfur assimilation pathway. APS synthesis involves the formation of a high-energy phosphoric-sulfuric acid anhydride bond driven by GTP hydrolysis by CysN coupled to ATP hydrolysis by CysD. The polypeptide is Sulfate adenylyltransferase subunit 2 (Psychromonas ingrahamii (strain DSM 17664 / CCUG 51855 / 37)).